We begin with the raw amino-acid sequence, 425 residues long: UPF0597 protein VFMJ11_0655 (425 aa).

The protein belongs to the UPF0597 family.

This chain is UPF0597 protein VFMJ11_0655, found in Aliivibrio fischeri (strain MJ11) (Vibrio fischeri).